Reading from the N-terminus, the 231-residue chain is Putative N-acetylmannosamine-6-phosphate 2-epimerase (231 aa).

It belongs to the NanE family.

It catalyses the reaction an N-acyl-D-glucosamine 6-phosphate = an N-acyl-D-mannosamine 6-phosphate. It functions in the pathway amino-sugar metabolism; N-acetylneuraminate degradation; D-fructose 6-phosphate from N-acetylneuraminate: step 3/5. In terms of biological role, converts N-acetylmannosamine-6-phosphate (ManNAc-6-P) to N-acetylglucosamine-6-phosphate (GlcNAc-6-P). The protein is Putative N-acetylmannosamine-6-phosphate 2-epimerase of Glaesserella parasuis serovar 5 (strain SH0165) (Haemophilus parasuis).